Consider the following 349-residue polypeptide: Isopentenyl-diphosphate delta-isomerase (349 aa).

6-7 is a substrate binding site; it reads RK. FMN is bound by residues 62–64, Ser-93, and Asn-122; that span reads AMT. Residue Gln-152 participates in substrate binding. Glu-153 contacts Mg(2+). Residues Lys-184, Thr-214, 258–259, and 280–281 contribute to the FMN site; these read GG and AG.

It belongs to the IPP isomerase type 2 family. In terms of assembly, homooctamer. Dimer of tetramers. FMN serves as cofactor. Requires NADPH as cofactor. It depends on Mg(2+) as a cofactor.

The protein localises to the cytoplasm. The enzyme catalyses isopentenyl diphosphate = dimethylallyl diphosphate. In terms of biological role, involved in the biosynthesis of isoprenoids. Catalyzes the 1,3-allylic rearrangement of the homoallylic substrate isopentenyl (IPP) to its allylic isomer, dimethylallyl diphosphate (DMAPP). In Bacillus cereus (strain AH820), this protein is Isopentenyl-diphosphate delta-isomerase.